Consider the following 583-residue polypeptide: Bifunctional dihydrofolate reductase-thymidylate synthase (583 aa).

Residues 9-229 (DIYAICACCK…TTLDFVIYSK (221 aa)) enclose the DHFR domain. 36 to 42 (GLGNEGG) lines the NADP(+) pocket. Aspartate 51 is a binding site for substrate. NADP(+) is bound by residues 104–106 (KAS) and 125–128 (LSRT). Residues isoleucine 165, tyrosine 171, and threonine 186 each contribute to the substrate site. Residue 166–173 (GGASVYKE) participates in NADP(+) binding. Residues 298-583 (HPEYQYLNII…HDKISMDMAA (286 aa)) are thymidylate synthase. Residue arginine 320 coordinates dUMP. The active site involves cysteine 465. DUMP contacts are provided by residues histidine 466, 484–488 (QRSCD), asparagine 496, and 526–528 (HVY).

In the N-terminal section; belongs to the dihydrofolate reductase family. This sequence in the C-terminal section; belongs to the thymidylate synthase family. As to quaternary structure, homodimer.

It catalyses the reaction (6S)-5,6,7,8-tetrahydrofolate + NADP(+) = 7,8-dihydrofolate + NADPH + H(+). The enzyme catalyses dUMP + (6R)-5,10-methylene-5,6,7,8-tetrahydrofolate = 7,8-dihydrofolate + dTMP. It functions in the pathway cofactor biosynthesis; tetrahydrofolate biosynthesis; 5,6,7,8-tetrahydrofolate from 7,8-dihydrofolate: step 1/1. Its function is as follows. Bifunctional enzyme. Involved in de novo dTMP biosynthesis. Key enzyme in folate metabolism. Catalyzes an essential reaction for de novo glycine and purine synthesis, DNA precursor synthesis, and for the conversion of dUMP to dTMP. In Plasmodium chabaudi, this protein is Bifunctional dihydrofolate reductase-thymidylate synthase.